We begin with the raw amino-acid sequence, 917 residues long: Translation initiation factor IF-2 (917 aa).

Disordered regions lie at residues 1–84 (MSDG…GRAG) and 150–318 (KESE…DRER). Positions 10-27 (DGNNTPSQGGEQTRSSRL) are enriched in polar residues. Low complexity-rich tracts occupy residues 69-84 (AAGP…GRAG), 154-177 (QQAA…AAEA), and 227-236 (SRPAAAAPAR). Residues 265–274 (GAPPAPPRRP) are compositionally biased toward pro residues. Basic and acidic residues predominate over residues 282–305 (GGSDRRSGRIDVRAAIEGDDDKTR). The tr-type G domain occupies 416 to 586 (PRAPVVTVMG…LLQSEMLDLK (171 aa)). The interval 425–432 (GHVDHGKT) is G1. 425 to 432 (GHVDHGKT) provides a ligand contact to GTP. The G2 stretch occupies residues 450 to 454 (GITQH). The segment at 472–475 (DTPG) is G3. Residues 472-476 (DTPGH) and 526-529 (NKID) contribute to the GTP site. Positions 526–529 (NKID) are G4. The segment at 562–564 (SAL) is G5.

It belongs to the TRAFAC class translation factor GTPase superfamily. Classic translation factor GTPase family. IF-2 subfamily.

It localises to the cytoplasm. One of the essential components for the initiation of protein synthesis. Protects formylmethionyl-tRNA from spontaneous hydrolysis and promotes its binding to the 30S ribosomal subunits. Also involved in the hydrolysis of GTP during the formation of the 70S ribosomal complex. The polypeptide is Translation initiation factor IF-2 (Gluconobacter oxydans (strain 621H) (Gluconobacter suboxydans)).